Here is a 116-residue protein sequence, read N- to C-terminus: PTS system cellobiose-specific EIIA component (116 aa).

The PTS EIIA type-3 domain occupies 11-109 (DDYMGVVMGI…AVEVVGQEQR (99 aa)). His85 functions as the Tele-phosphohistidine intermediate in the catalytic mechanism. The residue at position 85 (His85) is a Phosphohistidine; by HPr. Asp88 is a binding site for Mg(2+).

In terms of assembly, homotrimer. It depends on Mg(2+) as a cofactor.

Its function is as follows. The phosphoenolpyruvate-dependent sugar phosphotransferase system (sugar PTS), a major carbohydrate active transport system, catalyzes the phosphorylation of incoming sugar substrates concomitantly with their translocation across the cell membrane. Involved in cellobiose transport with PtcB and CelB. This system can also transport lactose. The sequence is that of PTS system cellobiose-specific EIIA component from Lactococcus lactis subsp. lactis (strain IL1403) (Streptococcus lactis).